Consider the following 521-residue polypeptide: Ribonuclease Y (521 aa).

Residues L5–L25 form a helical membrane-spanning segment. The segment at E77–D107 is disordered. The 61-residue stretch at T211–L271 folds into the KH domain. An HD domain is found at V337–A430.

This sequence belongs to the RNase Y family.

Its subcellular location is the cell membrane. Endoribonuclease that initiates mRNA decay. The protein is Ribonuclease Y of Latilactobacillus sakei subsp. sakei (strain 23K) (Lactobacillus sakei subsp. sakei).